The primary structure comprises 361 residues: Ribosomal RNA large subunit methyltransferase M (361 aa).

Residues S193, 226–229 (CPGG), D245, D265, and D283 contribute to the S-adenosyl-L-methionine site. The Proton acceptor role is filled by K312.

Belongs to the class I-like SAM-binding methyltransferase superfamily. RNA methyltransferase RlmE family. RlmM subfamily. Monomer.

It is found in the cytoplasm. It catalyses the reaction cytidine(2498) in 23S rRNA + S-adenosyl-L-methionine = 2'-O-methylcytidine(2498) in 23S rRNA + S-adenosyl-L-homocysteine + H(+). Functionally, catalyzes the 2'-O-methylation at nucleotide C2498 in 23S rRNA. The sequence is that of Ribosomal RNA large subunit methyltransferase M from Histophilus somni (strain 2336) (Haemophilus somnus).